The primary structure comprises 329 residues: 4-hydroxythreonine-4-phosphate dehydrogenase (329 aa).

The substrate site is built by His-136 and Thr-137. A divalent metal cation is bound by residues His-166, His-211, and His-266. 3 residues coordinate substrate: Lys-274, Asn-283, and Arg-292.

The protein belongs to the PdxA family. Homodimer. Zn(2+) is required as a cofactor. Mg(2+) serves as cofactor. Requires Co(2+) as cofactor.

It is found in the cytoplasm. The catalysed reaction is 4-(phosphooxy)-L-threonine + NAD(+) = 3-amino-2-oxopropyl phosphate + CO2 + NADH. It functions in the pathway cofactor biosynthesis; pyridoxine 5'-phosphate biosynthesis; pyridoxine 5'-phosphate from D-erythrose 4-phosphate: step 4/5. Catalyzes the NAD(P)-dependent oxidation of 4-(phosphooxy)-L-threonine (HTP) into 2-amino-3-oxo-4-(phosphooxy)butyric acid which spontaneously decarboxylates to form 3-amino-2-oxopropyl phosphate (AHAP). This chain is 4-hydroxythreonine-4-phosphate dehydrogenase, found in Salmonella typhimurium (strain LT2 / SGSC1412 / ATCC 700720).